Reading from the N-terminus, the 184-residue chain is Photosystem I assembly protein Ycf4 (184 aa).

A run of 2 helical transmembrane segments spans residues 25-45 and 57-77; these read ACIL…SYLG and ILFV…LFIS.

Belongs to the Ycf4 family.

It is found in the plastid. It localises to the chloroplast thylakoid membrane. Seems to be required for the assembly of the photosystem I complex. The chain is Photosystem I assembly protein Ycf4 from Cycas taitungensis (Prince sago).